Consider the following 103-residue polypeptide: Small ribosomal subunit protein bS18 (103 aa).

A compositionally biased stretch (basic and acidic residues) spans 1–19 (MSEERTERPERTERPERPQ). The disordered stretch occupies residues 1-33 (MSEERTERPERTERPERPQQRGSGPRKRRPFQR). Residues 24-33 (GPRKRRPFQR) are compositionally biased toward basic residues.

The protein belongs to the bacterial ribosomal protein bS18 family. In terms of assembly, part of the 30S ribosomal subunit. Forms a tight heterodimer with protein bS6.

Functionally, binds as a heterodimer with protein bS6 to the central domain of the 16S rRNA, where it helps stabilize the platform of the 30S subunit. The protein is Small ribosomal subunit protein bS18 of Geobacter sulfurreducens (strain ATCC 51573 / DSM 12127 / PCA).